A 204-amino-acid chain; its full sequence is SOSS complex subunit B homolog (204 aa).

The segment at residues 24 to 94 is a DNA-binding region (OB); that stretch reads IVLEVGVATV…TLYSGKNGEV (71 aa). The interval 115–204 is disordered; the sequence is RAEQQAVANP…GRGGLKGERR (90 aa). 2 stretches are compositionally biased toward low complexity: residues 122-131 and 139-183; these read ANPAATPAGL and GLPA…QTTT. Residues 187-198 show a composition bias toward gly residues; that stretch reads TRGGRGGGGRGG.

This sequence belongs to the SOSS-B family.

In Drosophila melanogaster (Fruit fly), this protein is SOSS complex subunit B homolog.